A 616-amino-acid polypeptide reads, in one-letter code: Hemagglutinin-neuraminidase (616 aa).

Residues 1–26 (MDRAVSQVALENDEREAKNTWRLVFR) lie on the Intravirion side of the membrane. Residues 27–47 (IAILLLTVVTLAISAAALAYS) traverse the membrane as a helical segment. The Virion surface portion of the chain corresponds to 48-616 (MEASTPSDLV…ELESYAASWP (569 aa)). N-linked (GlcNAc...) asparagine; by host glycosylation occurs at asparagine 119. Residues 124–152 (GAPIHDPDYIGGIGKELIVDDASDVTSFY) form an important for interaction with fusion/F protein region. 3 disulfide bridges follow: cysteine 172-cysteine 196, cysteine 186-cysteine 247, and cysteine 238-cysteine 251. An involved in neuraminidase activity region spans residues 234 to 239 (NRKSCS). N-linked (GlcNAc...) asparagine; by host glycosylation is found at asparagine 341 and asparagine 433. Disulfide bonds link cysteine 344-cysteine 461 and cysteine 455-cysteine 465. N-linked (GlcNAc...) asparagine; by host glycans are attached at residues asparagine 481, asparagine 538, and asparagine 600. A disulfide bridge links cysteine 531 with cysteine 542.

It belongs to the paramyxoviruses hemagglutinin-neuraminidase family. Homotetramer; composed of disulfide-linked homodimers. Interacts with F protein trimer. Interacts with host CG-1B; this interaction inhibits viral adsorption and replication rather than internalization.

Its subcellular location is the virion membrane. It is found in the host cell membrane. It catalyses the reaction Hydrolysis of alpha-(2-&gt;3)-, alpha-(2-&gt;6)-, alpha-(2-&gt;8)- glycosidic linkages of terminal sialic acid residues in oligosaccharides, glycoproteins, glycolipids, colominic acid and synthetic substrates.. Its function is as follows. Mediates the viral entry into the host cell together with fusion/F protein. Attaches the virus to sialic acid-containing cell receptors and thereby initiates infection. Binding of HN protein to the receptor induces a conformational change that allows the F protein to trigger virion/cell membranes fusion. Neuraminidase activity ensures the efficient spread of the virus by dissociating the mature virions from the neuraminic acid containing glycoproteins. The chain is Hemagglutinin-neuraminidase (HN) from Gallus gallus (Chicken).